We begin with the raw amino-acid sequence, 375 residues long: 5-amino-6-(D-ribitylamino)uracil--L-tyrosine 4-hydroxyphenyl transferase 1 (375 aa).

One can recognise a Radical SAM core domain in the interval 50 to 284; the sequence is VTYVVNRNIN…AVSRILFHGH (235 aa). 3 residues coordinate [4Fe-4S] cluster: Cys-64, Cys-68, and Cys-71.

Belongs to the radical SAM superfamily. CofH family. In terms of assembly, consists of two subunits, CofG and CofH. The cofactor is [4Fe-4S] cluster.

It carries out the reaction 5-amino-6-(D-ribitylamino)uracil + L-tyrosine + S-adenosyl-L-methionine = 5-amino-5-(4-hydroxybenzyl)-6-(D-ribitylimino)-5,6-dihydrouracil + 2-iminoacetate + 5'-deoxyadenosine + L-methionine + H(+). It functions in the pathway cofactor biosynthesis; coenzyme F0 biosynthesis. Catalyzes the radical-mediated synthesis of 5-amino-5-(4-hydroxybenzyl)-6-(D-ribitylimino)-5,6-dihydrouracil from 5-amino-6-(D-ribitylamino)uracil and L-tyrosine. The protein is 5-amino-6-(D-ribitylamino)uracil--L-tyrosine 4-hydroxyphenyl transferase 1 of Methanosarcina acetivorans (strain ATCC 35395 / DSM 2834 / JCM 12185 / C2A).